A 1383-amino-acid chain; its full sequence is PAS domain-containing serine/threonine-protein kinase (1383 aa).

Residue Met-1 is modified to N-acetylmethionine. Ser-19 carries the phosphoserine modification. A Phosphothreonine modification is found at Thr-31. PAS domains follow at residues 117–188 (SGSL…VEAD) and 333–400 (YQAS…SVQL). The residue at position 1000 (Ser-1000) is a Phosphoserine. The Protein kinase domain maps to 1059–1311 (YNTISPLGSG…LEKLIRDPWV (253 aa)). Residues 1065-1073 (LGSGAFGFV), Lys-1088, and 1142-1149 (EKHGSGMD) each bind ATP. The Proton acceptor role is filled by Asp-1188. Asp-1206 contributes to the ATP binding site. Thr-1221 and Thr-1225 each carry phosphothreonine; by autocatalysis. The interval 1344–1383 (GSRSPSEMAQREGLCGPPAPRETRGDQHCLHLKDPSLPVS) is disordered. Residues 1364-1377 (RETRGDQHCLHLKD) are compositionally biased toward basic and acidic residues.

This sequence belongs to the protein kinase superfamily. CAMK Ser/Thr protein kinase family. Post-translationally, autophosphorylated on Thr-1221 and Thr-1225. Autophosphorylation is activated by phospholipids. Ubiquitously expressed. Strongly up-regulated in postmeiotic germ cells during spermatogenesis.

It is found in the cytoplasm. The protein localises to the nucleus. It catalyses the reaction L-seryl-[protein] + ATP = O-phospho-L-seryl-[protein] + ADP + H(+). It carries out the reaction L-threonyl-[protein] + ATP = O-phospho-L-threonyl-[protein] + ADP + H(+). Protein kinase activity is inhibited by the first PAS domain: binding of an unidentified ligand desinhibits the protein kinase activity. May be activated by autophosphorylation on Thr-1221 and Thr-1225. Autophosphorylation is enhanced upon phosphatidylinositol monophosphate (phosphatidylinositol 4-phosphate) binding and inhibited upon phosphatidylinositol bi- and tri-phosphate binding. In contrast, phosphorylation of target proteins is inhibited upon all phosphatidylinositol-binding (phosphatidylinositol mono- bi- and tri-phosphate). Functionally, serine/threonine-protein kinase involved in energy homeostasis and protein translation. Phosphorylates EEF1A1, GYS1, PDX1 and RPS6. Probably plays a role under changing environmental conditions (oxygen, glucose, nutrition), rather than under standard conditions. Acts as a sensor involved in energy homeostasis: regulates glycogen synthase synthesis by mediating phosphorylation of GYS1, leading to GYS1 inactivation. May be involved in glucose-stimulated insulin production in pancreas and regulation of glucagon secretion by glucose in alpha cells; however such data require additional evidences. May play a role in regulation of protein translation by phosphorylating EEF1A1, leading to increase translation efficiency. May also participate in respiratory regulation. The protein is PAS domain-containing serine/threonine-protein kinase (Pask) of Mus musculus (Mouse).